A 348-amino-acid polypeptide reads, in one-letter code: Sesquiterpene synthase MGU_11447 (348 aa).

Residues aspartate 91 and aspartate 96 each contribute to the Mg(2+) site. Residues 91–96 (DDLFVD) carry the DDXXXD motif motif. Arginine 184 contacts substrate. 3 residues coordinate Mg(2+): asparagine 230, serine 234, and glutamate 238.

This sequence belongs to the terpene synthase family. The cofactor is Mg(2+).

It carries out the reaction (2E,6E)-farnesyl diphosphate + H2O = (+)-corvol ether B + diphosphate. The enzyme catalyses (2E,6E)-farnesyl diphosphate + H2O = (+)-corvol ether A + diphosphate. Its function is as follows. Terpene synthase that catalyzes the conversion of (2E,6E)-farnesyl diphosphate (FPP) into sesquiterpenes which are important for fungi-environment interactions. Produces a mixture consisting of 8 sesquiterpenes including corvol ethers A and B, as well as traces of epizonarene, gamma-cadinene, delta-cadinene, alpha-cadinene, alpha-cadinol, and an unidentified sesquiterpene. Produces both corvol ether A and corvol ether B in similar concentrations. In Metarhizium guizhouense (strain ARSEF 977), this protein is Sesquiterpene synthase MGU_11447.